We begin with the raw amino-acid sequence, 259 residues long: MVEFKILEKRPDSIKFIVSGVDVPFANALRRTILSEVPTFAVDEVEFLENDSALFDEIIAHRLAMIPLTTPHERFSLDALELDDYTVTLSLEAEGPGMVYSGDLKSSDGDVKPANPNIPIVKLAEGQRLTFNAYARLGRGKDHAKWQPGFVYYKYLTKIHVSKDVPDWEELKELAERRGLPVEESDEEIVITTIKAFYLPRKFEEHMGKGIREEIVPGSFVFTVETNGELPVEEIVSIALKILMRKSDRFINELHKLAD.

This sequence belongs to the archaeal Rpo3/eukaryotic RPB3 RNA polymerase subunit family. Part of the RNA polymerase complex.

The protein resides in the cytoplasm. The catalysed reaction is RNA(n) + a ribonucleoside 5'-triphosphate = RNA(n+1) + diphosphate. In terms of biological role, DNA-dependent RNA polymerase (RNAP) catalyzes the transcription of DNA into RNA using the four ribonucleoside triphosphates as substrates. The sequence is that of DNA-directed RNA polymerase subunit Rpo3 from Thermococcus kodakarensis (strain ATCC BAA-918 / JCM 12380 / KOD1) (Pyrococcus kodakaraensis (strain KOD1)).